We begin with the raw amino-acid sequence, 529 residues long: MTISEARLSPQVNLLPIKRHSNEEVEETAAILKKRTIDNEKCKDSDPGFGSLQRRLLQQLYGTLPTDEKIIFTYLQDCQQEIDRIIKQSIIQKESHSVILVGPRQSYKTYLLDYELSLLQQSYKEQFITIRLNGFIHSEQTAINGIATQLEQQLQKIHGSEEKIDDTSLETISSGSLTEVFEKILLLLDSTTKTRNEDSGEVDRESITKITVVFIFDEIDTFAGPVRQTLLYNLFDMVEHSRVPVCIFGCTTKLNILEYLEKRVKSRFSQRVIYMPQIQNLDDMVDAVRNLLTVRSEISPWVSQWNETLEKELSDPRSNLNRHIRMNFETFRSLPTLKNSIIPLVATSKNFGSLCTAIKSCSFLDIYNKNQLSNNLTGRLQSLSDLELAILISAARVALRAKDGSFNFNLAYAEYEKMIKAINSRIPTVAPTTNVGTGQSTFSIDNTIKLWLKKDVKNVWENLVQLDFFTEKSAVGLRDNATAAFYASNYQFQGTMIPFDLRSYQMQIILQELRRIIPKSNMYYSWTQL.

S9 is modified (phosphoserine).

Belongs to the ORC4 family. As to quaternary structure, component of the origin recognition complex (ORC) composed of at least ORC1, ORC2, ORC3, ORC4, ORC5 and ORC6.

It localises to the nucleus. Component of the origin recognition complex (ORC) that binds origins of replication. It has a role in both chromosomal replication and mating type transcriptional silencing. Binds to the ARS consensus sequence (ACS) of origins of replication. This chain is Origin recognition complex subunit 4 (ORC4), found in Saccharomyces cerevisiae (strain ATCC 204508 / S288c) (Baker's yeast).